The following is a 114-amino-acid chain: Non-specific lipid-transfer protein 2 (114 aa).

The first 23 residues, 1-23, serve as a signal peptide directing secretion; that stretch reads MEMFGKIACFVVFCMVVVAPHAE. Cystine bridges form between C27–C73, C37–C50, C51–C96, and C71–C110.

It belongs to the plant LTP family.

Its function is as follows. Plant non-specific lipid-transfer proteins transfer phospholipids as well as galactolipids across membranes. May play a role in wax or cutin deposition in the cell walls of expanding epidermal cells and certain secretory tissues. The chain is Non-specific lipid-transfer protein 2 (LE16) from Solanum lycopersicum (Tomato).